Reading from the N-terminus, the 188-residue chain is Ribosome maturation factor RimM (188 aa).

Residues 103-177 (EEGWYYADLI…RVVIDPPAGT (75 aa)) enclose the PRC barrel domain.

Belongs to the RimM family. Binds ribosomal protein uS19.

It localises to the cytoplasm. Functionally, an accessory protein needed during the final step in the assembly of 30S ribosomal subunit, possibly for assembly of the head region. Essential for efficient processing of 16S rRNA. May be needed both before and after RbfA during the maturation of 16S rRNA. It has affinity for free ribosomal 30S subunits but not for 70S ribosomes. This is Ribosome maturation factor RimM from Parvibaculum lavamentivorans (strain DS-1 / DSM 13023 / NCIMB 13966).